The sequence spans 491 residues: Histamine H1 receptor (491 aa).

Residues 1–30 are Extracellular-facing; that stretch reads MTCPNSSCVFEDKMCQGNKTAPANDAQLTP. Asn-5 and Asn-18 each carry an N-linked (GlcNAc...) asparagine glycan. The helical transmembrane segment at 31-51 threads the bilayer; the sequence is LVVVLSTISLVTVGLNLLVLY. Over 52 to 65 the chain is Cytoplasmic; it reads AVRSERKLHTVGNL. Residues 66–90 traverse the membrane as a helical segment; the sequence is YIVSLSVADLIVGVVVMPMNILYLL. Residues 91 to 98 are Extracellular-facing; it reads MSRWSLGR. Residues 99–124 traverse the membrane as a helical segment; sequence PLCLFWLSMDYVASTASIFSVFILCI. A disulfide bridge links Cys-101 with Cys-181. 2 residues coordinate histamine: Asp-108 and Thr-113. The segment at 108-113 is important for agonist binding; it reads DYVAST. Over 125–145 the chain is Cytoplasmic; sequence DRYRSVQQPLKYLRYRTKTRA. A phosphothreonine mark is found at Thr-141 and Thr-143. A helical membrane pass occupies residues 146–165; that stretch reads SITILAAWFLSFLWIIPILG. Residues 166–189 are Extracellular-facing; it reads WRHFQPKTPEPREDKCETDFYNVT. The helical transmembrane segment at 190-212 threads the bilayer; it reads WFKVMTAIINFYLPTLLMLWFYA. Asn-199 serves as a coordination point for histamine. The Cytoplasmic segment spans residues 213–420; the sequence is KIYKAVRQHC…MNRERKAAKQ (208 aa). Ser-231 carries the post-translational modification Phosphoserine. 2 disordered regions span residues 246 to 297 and 360 to 385; these read QVGA…KEEK and QSFS…SESS. Over residues 252–262 the composition is skewed to basic and acidic residues; the sequence is PGKESPWEVLK. A phosphoserine mark is found at Ser-384, Ser-400, and Ser-402. Residues 421-444 traverse the membrane as a helical segment; it reads LGFIMAAFIICWIPYFIFFMVIAF. The tract at residues 428–432 is important for agonist binding; it reads FIICW. A histamine-binding site is contributed by Tyr-435. Cys-445 and Cys-448 are oxidised to a cystine. The Extracellular portion of the chain corresponds to 445-450; sequence CESCCN. A helical transmembrane segment spans residues 451–473; sequence QHVHMFTIWLGYINSTLNPLIYP. At 474–491 the chain is on the cytoplasmic side; that stretch reads LCNENFKKTFKKILHIRS.

The protein belongs to the G-protein coupled receptor 1 family. Phosphorylation at sites in the second and third cytoplasmic loops independently contribute to agonist-induced receptor down-regulation. In terms of tissue distribution, brain, lung, small intestine, uterus, adrenal medulla and spleen.

It is found in the cell membrane. G-protein-coupled receptor for histamine, a biogenic amine that functions as an immune modulator and a neurotransmitter. Through the H1 receptor, histamine mediates the contraction of smooth muscles and increases capillary permeability due to contraction of terminal venules. Also mediates neurotransmission in the central nervous system and thereby regulates circadian rhythms, emotional and locomotor activities as well as cognitive functions. This chain is Histamine H1 receptor, found in Bos taurus (Bovine).